A 269-amino-acid chain; its full sequence is MQKPVNNNFKESLLRTVESLRKSIRSGEMDDSTSGLVPGLVQANIVILPKIWAHDFLLFCQKNPIACPLIDVFDAGQFLLNSLGKDIDVRTDIPEYCVFVGGVKTEVKKDISDLWQDDFVVFALGCSFSFEYALQQAGLSIANLESNSNVSMYETNVPTKSVGVFQGNVVVSMRPFTPAQAIKAIQITSQFPLAHGAPIHIGKPEMIGINSLSNPSFGDSVEINEDHIPVFWGCGVTPQVVISNAKIPMFITHAPGKMLITDKLYSELR.

Belongs to the D-glutamate cyclase family.

The polypeptide is Putative hydro-lyase Swoo_1731 (Shewanella woodyi (strain ATCC 51908 / MS32)).